The sequence spans 233 residues: uncharacterized protein (233 aa).

A run of 6 helical transmembrane segments spans residues 7–27, 36–56, 62–82, 119–139, 159–179, and 188–208; these read VPIFIAILSFIVMCIGELLAY, YEFEAISFGFIFGVATLILIP, MFVLYVILGMITVYLIEKYLA, LIIAVSYISEIGLPLYLAILM, PLYPGVFVSFGTVLGTIVGLV, and ILLAFSGGVFLGAFLMLAPHI.

The protein resides in the cell membrane. This is an uncharacterized protein from Methanocaldococcus jannaschii (strain ATCC 43067 / DSM 2661 / JAL-1 / JCM 10045 / NBRC 100440) (Methanococcus jannaschii).